A 328-amino-acid chain; its full sequence is MDAQNKEVDALVQKITGLHAAIAKLPSLSPSPDVDALFTDLVTACVPPSPVDVTKLGSEAQEMREGLIRLCSEAEGKLEAHYSDMLAAFDNPLDHLGMFPYYSNYINLSKLEYELLARYVPGGIARPAVAFIGSGPLPFSSYVLAARHLPDAMFDNYDLCSAANDRASKLFRADKDVGARMSFHTADVADLTRELAAYDVVFLAALVGMAAEDKAKVIPHLGAHMADGAALVVRSAQARGFLYPIVDPQDIGRGGFEVLAVCHPDDDVVNSVIIAHKSKDVHANERPNGRGGQYRGAVPVVSPPCRFGEMVADVTHKREEFTNAEVAF.

Belongs to the nicotianamine synthase (NAS)-like family.

The enzyme catalyses 3 S-adenosyl-L-methionine = nicotianamine + 3 S-methyl-5'-thioadenosine + 3 H(+). Synthesizes nicotianamine, a polyamine that is the first intermediate in the synthesis of the phytosiderophores of the mugineic acid type found in gramineae which serves as a sensor for the physiological iron status within the plant, and/or might be involved in the transport of iron. The sequence is that of Probable nicotianamine synthase 6 (NAS6) from Hordeum vulgare (Barley).